A 567-amino-acid polypeptide reads, in one-letter code: MWKHLLSGGLKVEQQNASAKKLILSVLNSTATKREARDYLTKYTRSDDSKQLNHCLLLIRHLNSLRQHEISELTSTVKKLGMLGLRPIFVIPPSRHIAKQAEILDIITTLAGFRPLQLQNSLSQSIDGTYTSILSSQNAILNNHELEVVPILKPYVYREKDASEFLTNDFTKFMQNLCKGNNTHIDKFFILNRIGGIPSNERNENSHVFVNLSQEYDCLKKDLKGQVDLLIERRPRTESLLHKLELHLNEDAINTLENQFKEHLQDLEMMNVVLSNLSSSATGLITTIESAASSSEKKNPLIYNILTDRSLISSSLPRFKKIRHTPPSGSRPAKKFHRMTYLEDYQQLDKSSPPDSALVTTVFKKGIDIKIFDYPKLTQFNSLSLPVEFRVKDSPQTNPLHKIDLSKLKGLIDRSFKRSLNLNHYLHRINGNIASIIVIGDYDGIAILTNEGPNDNPFVYLDKFAISPEMKGSLCISDIIFNLMVKKFPKELLWRSRNDNVVNKWYFQRSVGVLDLSIDLGDGNQTKSNFNLFYYGEPKSTNYGFHNLARLKEYAKHIRDIHPSWDK.

The N-acetyltransferase domain occupies 392–558; the sequence is KDSPQTNPLH…ARLKEYAKHI (167 aa).

The protein belongs to the acetyltransferase family.

The protein resides in the mitochondrion. It carries out the reaction L-glutamate + acetyl-CoA = N-acetyl-L-glutamate + CoA + H(+). Its pathway is amino-acid biosynthesis; L-arginine biosynthesis; N(2)-acetyl-L-ornithine from L-glutamate: step 1/4. N-acetylglutamate synthase involved in arginine biosynthesis. The chain is Amino-acid acetyltransferase, mitochondrial (ARG2) from Vanderwaltozyma polyspora (strain ATCC 22028 / DSM 70294 / BCRC 21397 / CBS 2163 / NBRC 10782 / NRRL Y-8283 / UCD 57-17) (Kluyveromyces polysporus).